Here is a 282-residue protein sequence, read N- to C-terminus: Bifunctional protein FolD (282 aa).

Residues 164–166, Ile-189, and Ile-230 each bind NADP(+); that span reads GAS.

It belongs to the tetrahydrofolate dehydrogenase/cyclohydrolase family. In terms of assembly, homodimer.

The enzyme catalyses (6R)-5,10-methylene-5,6,7,8-tetrahydrofolate + NADP(+) = (6R)-5,10-methenyltetrahydrofolate + NADPH. It carries out the reaction (6R)-5,10-methenyltetrahydrofolate + H2O = (6R)-10-formyltetrahydrofolate + H(+). Its pathway is one-carbon metabolism; tetrahydrofolate interconversion. In terms of biological role, catalyzes the oxidation of 5,10-methylenetetrahydrofolate to 5,10-methenyltetrahydrofolate and then the hydrolysis of 5,10-methenyltetrahydrofolate to 10-formyltetrahydrofolate. The sequence is that of Bifunctional protein FolD from Campylobacter jejuni subsp. doylei (strain ATCC BAA-1458 / RM4099 / 269.97).